The sequence spans 589 residues: Protein kinase G11A (589 aa).

A disordered region spans residues 1–167 (MASKAMPRAP…SACSSISSVT (167 aa)). 3 stretches are compositionally biased toward polar residues: residues 15-36 (NLQS…SPSK), 46-55 (AESSKPNSEV), and 63-76 (TQHQ…TGSN). The segment covering 91–100 (RLADEEKGVV) has biased composition (basic and acidic residues). Over residues 142–165 (SSSRCRPSTSSDVSDESACSSISS) the composition is skewed to low complexity. In terms of domain architecture, Protein kinase spans 195–533 (FKLLKKLGCG…ATEIKQHPFF (339 aa)). ATP contacts are provided by residues 201 to 209 (LGCGDIGSV) and Lys224. The active-site Proton acceptor is Asp320. A disordered region spans residues 551-589 (RPVEIERPPKQPVSTSEPAAAPSDAAQKSSDSYLEFDFF).

It belongs to the protein kinase superfamily. Ser/Thr protein kinase family.

It carries out the reaction L-seryl-[protein] + ATP = O-phospho-L-seryl-[protein] + ADP + H(+). It catalyses the reaction L-threonyl-[protein] + ATP = O-phospho-L-threonyl-[protein] + ADP + H(+). May play a role in the regulation of metabolism and signal transduction processes. This Oryza sativa subsp. indica (Rice) protein is Protein kinase G11A.